The following is a 256-amino-acid chain: UPF0246 protein Bpet1601 (256 aa).

The protein belongs to the UPF0246 family.

This Bordetella petrii (strain ATCC BAA-461 / DSM 12804 / CCUG 43448) protein is UPF0246 protein Bpet1601.